The sequence spans 396 residues: Na(+)/H(+) antiporter NhaA 1 (396 aa).

Helical transmembrane passes span 9-29 (LHNE…AMLI), 59-79 (LLLW…GLEL), 95-115 (VLPV…YVMF), 125-145 (GWAV…ALLG), 154-174 (LFLL…IAIF), 177-197 (SDLS…LFLL), 200-220 (IGVK…VAVL), 223-243 (GVHA…KGET), 260-280 (VVGL…SLAG), 281-301 (LGLN…LLLG), 332-352 (GVAL…SLAF), and 373-393 (ILSG…FSLA).

The protein belongs to the NhaA Na(+)/H(+) (TC 2.A.33) antiporter family.

It is found in the cell inner membrane. It catalyses the reaction Na(+)(in) + 2 H(+)(out) = Na(+)(out) + 2 H(+)(in). Its function is as follows. Na(+)/H(+) antiporter that extrudes sodium in exchange for external protons. This chain is Na(+)/H(+) antiporter NhaA 1, found in Magnetococcus marinus (strain ATCC BAA-1437 / JCM 17883 / MC-1).